A 536-amino-acid chain; its full sequence is Caspase A (536 aa).

Residues 1–273 (MVLKTIEDNC…DSQSRMPRTD (273 aa)) constitute a propeptide, removed in mature form by autoprocessing. Catalysis depends on residues His-364 and Cys-406.

It belongs to the peptidase C14A family. Heterodimer formed by the tight association of the large subunit p16 and the small subunit p14. Autocatalytic cleavage removes the propeptide and generates the two active subunits p16 and p14 in vitro. Cannot be cleaved by ced-3 in vitro. In terms of tissue distribution, isoform a: Expression is restricted to the late germline pachytene stage of meiosis I in both L4 larvae and adult hermaphrodite gonads. Isoform b: Expression is restricted to the late germline pachytene stage of meiosis I in both L4 larvae and adult hermaphrodite gonads.

It carries out the reaction Strict requirement for an Asp residue at position P1 and has a preferred cleavage sequence of Tyr-Val-Ala-Asp-|-.. Its activity is regulated as follows. Inhibited by cysteine protease inhibitor iodoacetic acid (CH3COOI) but not by N-[N-(L-3-transcarboxirane-2-carbonyl)-leucyl]-agmatine (E-64) or benzyloxycarbonyl-DEVD-fluoro-methyl ketone (Z-DEVD-FMK). Functionally, cysteine protease which, in vitro, cleaves itself and caspase ced-3 into their mature active forms. Also cleaves, in vitro, inactive caspase csp-2 isoform b. Required maternally to induce apoptosis in a subset of cells fated to die during embryogenesis, mostly independently of the ced-9, ced-4 and ced-3 canonical apoptosis pathway. Involved in the degeneration of dopaminergic CEP neurons in response to high Mn(2+) levels. Its function is as follows. Dispensable for regulating apoptosis during embryogenesis. This Caenorhabditis elegans protein is Caspase A.